The following is a 210-amino-acid chain: Pyridoxine/pyridoxamine 5'-phosphate oxidase (210 aa).

Substrate contacts are provided by residues 7–10 and K65; that span reads REDY. FMN-binding positions include 60-65, 75-76, R81, K82, and Q104; these read RMVLLK and FT. The substrate site is built by Y122, R126, and S130. FMN contacts are provided by residues 139-140 and W183; that span reads QS. Position 189-191 (189-191) interacts with substrate; it reads RLH. R193 serves as a coordination point for FMN.

This sequence belongs to the pyridoxamine 5'-phosphate oxidase family. In terms of assembly, homodimer. FMN is required as a cofactor.

The enzyme catalyses pyridoxamine 5'-phosphate + O2 + H2O = pyridoxal 5'-phosphate + H2O2 + NH4(+). The catalysed reaction is pyridoxine 5'-phosphate + O2 = pyridoxal 5'-phosphate + H2O2. The protein operates within cofactor metabolism; pyridoxal 5'-phosphate salvage; pyridoxal 5'-phosphate from pyridoxamine 5'-phosphate: step 1/1. It functions in the pathway cofactor metabolism; pyridoxal 5'-phosphate salvage; pyridoxal 5'-phosphate from pyridoxine 5'-phosphate: step 1/1. In terms of biological role, catalyzes the oxidation of either pyridoxine 5'-phosphate (PNP) or pyridoxamine 5'-phosphate (PMP) into pyridoxal 5'-phosphate (PLP). The protein is Pyridoxine/pyridoxamine 5'-phosphate oxidase of Neisseria meningitidis serogroup A / serotype 4A (strain DSM 15465 / Z2491).